Reading from the N-terminus, the 374-residue chain is DNA replication and repair protein RecF (374 aa).

30 to 37 (GHNAQGKT) serves as a coordination point for ATP.

Belongs to the RecF family.

The protein resides in the cytoplasm. The RecF protein is involved in DNA metabolism; it is required for DNA replication and normal SOS inducibility. RecF binds preferentially to single-stranded, linear DNA. It also seems to bind ATP. The sequence is that of DNA replication and repair protein RecF from Limosilactobacillus reuteri (strain DSM 20016) (Lactobacillus reuteri).